The following is a 488-amino-acid chain: Facilitated trehalose transporter Tret1-2 homolog (488 aa).

At 1–28 (MKILMRADTHVSYSVPAEGPKANFTFSQ) the chain is on the cytoplasmic side. The helical transmembrane segment at 29–49 (VLAALSVSLCSLVVGFVSAYT) threads the bilayer. Residues 50–72 (SPALVSMTDRTITSFEVTKDAGS) lie on the Extracellular side of the membrane. A helical transmembrane segment spans residues 73-93 (WVGGIMPLAALAGGITGGPLI). The Cytoplasmic portion of the chain corresponds to 94 to 105 (EYLGRRTTILAT). The chain crosses the membrane as a helical span at residues 106–126 (AVPFIVSSLLIACAVNVIMIL). Residues 127-129 (CGR) are Extracellular-facing. Residues 130–150 (FLTGFCVGIASLSLPVYLGET) form a helical membrane-spanning segment. Topologically, residues 151-160 (LQPEVRGTLG) are cytoplasmic. The helical transmembrane segment at 161–181 (LLPTALGNIGILVCYVAGSFM) threads the bilayer. A glycan (N-linked (GlcNAc...) asparagine) is linked at Asn182. Over 182-184 (NWS) the chain is Extracellular. The chain crosses the membrane as a helical span at residues 185 to 205 (MLAFLGAALPVPFLILMIIIP). Residues 206–268 (ETPRWFVNRG…ELFKRINLKP (63 aa)) are Cytoplasmic-facing. Residues 269 to 289 (LSISLGLMFFQQFSGINAVIF) traverse the membrane as a helical segment. Residues 290-305 (YTVQIFKDAGSTIDSN) are Extracellular-facing. A helical membrane pass occupies residues 306-326 (LCTIIVGIVNFFATFMGILLI). At 327-332 (DRLGRK) the chain is on the cytoplasmic side. Residues 333–353 (ILLYISDIAMILTLSILGGFF) traverse the membrane as a helical segment. Residues 354–372 (YCKAHGPDVSHLGWLPLTC) lie on the Extracellular side of the membrane. Residues 373-393 (FVIYILGFSLGFGPIPWLMMG) form a helical membrane-spanning segment. The Cytoplasmic portion of the chain corresponds to 394–402 (EILPAKIRG). A helical membrane pass occupies residues 403-423 (PAASVVTAFNWFCTFVVTKTF). Residues 424-433 (QDLTVAMGAH) are Extracellular-facing. The helical transmembrane segment at 434–454 (GAFWLFGVVCIVGLFFVIICV) threads the bilayer. Over 455–488 (PETRGKSLEEIERKMMGRVPISAVVNIKPFSFNM) the chain is Cytoplasmic.

It belongs to the major facilitator superfamily. Sugar transporter (TC 2.A.1.1) family. Trehalose transporter subfamily.

It is found in the cell membrane. Functionally, fails to transport trehalose. The polypeptide is Facilitated trehalose transporter Tret1-2 homolog (Drosophila simulans (Fruit fly)).